The following is a 108-amino-acid chain: UPF0145 protein YjfJ (108 aa).

Belongs to the UPF0145 family.

This is UPF0145 protein YjfJ (yjfJ) from Lactococcus lactis subsp. lactis (strain IL1403) (Streptococcus lactis).